A 440-amino-acid chain; its full sequence is Cytochrome b (440 aa).

The chain crosses the membrane as a helical span at residues 46–66; it reads IWGIVLAFCLVLQIATGIVLV. The heme b site is built by His-97 and His-111. The next 9 membrane-spanning stretches (helical) occupy residues 100–120, 129–149, 156–176, 194–214, 253–273, 296–315, 330–350, 365–385, and 394–414; these read GASLFFLAVYIHIFRGLYYGS, WIVGMLIYLMMMGTAFMGYVL, FWGATVITGLFGAIPGVGEAI, FFSLHYLLPFVIAALVVVHIW, LFALAVVLVVFFAIVGFMPNY, WYFLPFYAILRAFTADVWVV, FFGVIAMFGAILVMALVPWLD, WWFWLLAVDFVVLMWVGAMPA, and LAGSAYWFAYFLIILPLLGII. Residues His-198 and His-212 each coordinate heme b.

It belongs to the cytochrome b family. The main subunits of complex b-c1 are: cytochrome b, cytochrome c1 and the Rieske protein. It depends on heme b as a cofactor.

The protein resides in the cell membrane. In terms of biological role, component of the ubiquinol-cytochrome c reductase complex (complex III or cytochrome b-c1 complex), which is a respiratory chain that generates an electrochemical potential coupled to ATP synthesis. The polypeptide is Cytochrome b (petB) (Paracoccus denitrificans).